A 142-amino-acid chain; its full sequence is Autophagy-related protein 31 (142 aa).

It localises to the cytoplasm. Its subcellular location is the cytoskeleton. It is found in the preautophagosomal structure. Functionally, plays a role in starvation-induced autophagy. Involved in mitophagy. Functions with ATG17 and ATG29 at the preautophagosomal structure (PAS) in order to form normal autophagosomes under starvation conditions. May be involved in microtubule function, such as chromosome segregation and karyogamy. The protein is Autophagy-related protein 31 (CIS1) of Eremothecium gossypii (strain ATCC 10895 / CBS 109.51 / FGSC 9923 / NRRL Y-1056) (Yeast).